Consider the following 293-residue polypeptide: 4-hydroxy-tetrahydrodipicolinate synthase (293 aa).

A pyruvate-binding site is contributed by Thr44. Tyr132 functions as the Proton donor/acceptor in the catalytic mechanism. Catalysis depends on Lys161, which acts as the Schiff-base intermediate with substrate. Position 203 (Ile203) interacts with pyruvate.

It belongs to the DapA family. Homotetramer; dimer of dimers.

The protein localises to the cytoplasm. It catalyses the reaction L-aspartate 4-semialdehyde + pyruvate = (2S,4S)-4-hydroxy-2,3,4,5-tetrahydrodipicolinate + H2O + H(+). The protein operates within amino-acid biosynthesis; L-lysine biosynthesis via DAP pathway; (S)-tetrahydrodipicolinate from L-aspartate: step 3/4. In terms of biological role, catalyzes the condensation of (S)-aspartate-beta-semialdehyde [(S)-ASA] and pyruvate to 4-hydroxy-tetrahydrodipicolinate (HTPA). In Sulfurihydrogenibium sp. (strain YO3AOP1), this protein is 4-hydroxy-tetrahydrodipicolinate synthase.